The sequence spans 260 residues: MILDEIVAQKKIQLKKDMSRITIEGWKQKIKRPGIHKPLDFYGALKNNGDISIIAEVKKASPSKGIIKEDFDPLKIAKEYVESDIQAISVLTERNFFKGDEDYLVKIRQFCPLPILRKDFIIDLWQIYESRYIGADAILLIVSLLSDEELKKFQIVANILGMQCLVEVHDERELERALESGARIIGINNRDLRTFEVDLKNTEKLMNRIPNDRVVVSESGIKDTEDLKYLKELGVDAVLIGETFMRARSISEKIREFKAV.

Belongs to the TrpC family.

It catalyses the reaction 1-(2-carboxyphenylamino)-1-deoxy-D-ribulose 5-phosphate + H(+) = (1S,2R)-1-C-(indol-3-yl)glycerol 3-phosphate + CO2 + H2O. It functions in the pathway amino-acid biosynthesis; L-tryptophan biosynthesis; L-tryptophan from chorismate: step 4/5. This is Indole-3-glycerol phosphate synthase from Acetivibrio thermocellus (strain ATCC 27405 / DSM 1237 / JCM 9322 / NBRC 103400 / NCIMB 10682 / NRRL B-4536 / VPI 7372) (Clostridium thermocellum).